The chain runs to 115 residues: DNA-directed RNA polymerase II subunit RPB11-b2 (115 aa).

This sequence belongs to the archaeal Rpo11/eukaryotic RPB11/RPC19 RNA polymerase subunit family. Component of the RNA polymerase II (Pol II) complex consisting of 12 subunits.

The protein resides in the nucleus. DNA-dependent RNA polymerase catalyzes the transcription of DNA into RNA using the four ribonucleoside triphosphates as substrates. Component of RNA polymerase II which synthesizes mRNA precursors and many functional non-coding RNAs. Pol II is the central component of the basal RNA polymerase II transcription machinery. It is composed of mobile elements that move relative to each other. RPB11 is part of the core element with the central large cleft. The polypeptide is DNA-directed RNA polymerase II subunit RPB11-b2 (POLR2J3) (Homo sapiens (Human)).